The primary structure comprises 461 residues: L-serine dehydratase (461 aa).

It belongs to the iron-sulfur dependent L-serine dehydratase family. The cofactor is [4Fe-4S] cluster.

It carries out the reaction L-serine = pyruvate + NH4(+). The protein operates within carbohydrate biosynthesis; gluconeogenesis. This chain is L-serine dehydratase (sdaA), found in Mycobacterium bovis (strain ATCC BAA-935 / AF2122/97).